A 255-amino-acid chain; its full sequence is Triosephosphate isomerase (255 aa).

9 to 11 (NWK) contributes to the substrate binding site. The Electrophile role is filled by H95. E167 (proton acceptor) is an active-site residue. Substrate is bound by residues G173, S212, and 233 to 234 (GG).

It belongs to the triosephosphate isomerase family. In terms of assembly, homodimer.

It is found in the cytoplasm. It catalyses the reaction D-glyceraldehyde 3-phosphate = dihydroxyacetone phosphate. The protein operates within carbohydrate biosynthesis; gluconeogenesis. Its pathway is carbohydrate degradation; glycolysis; D-glyceraldehyde 3-phosphate from glycerone phosphate: step 1/1. Involved in the gluconeogenesis. Catalyzes stereospecifically the conversion of dihydroxyacetone phosphate (DHAP) to D-glyceraldehyde-3-phosphate (G3P). This Escherichia fergusonii (strain ATCC 35469 / DSM 13698 / CCUG 18766 / IAM 14443 / JCM 21226 / LMG 7866 / NBRC 102419 / NCTC 12128 / CDC 0568-73) protein is Triosephosphate isomerase.